The primary structure comprises 225 residues: Two-component response regulator ARR8 (225 aa).

The Response regulatory domain maps to 10 to 145 (HVLAVDDSLF…DLTKLKPHMM (136 aa)). Asp-78 carries the post-translational modification 4-aspartylphosphate.

This sequence belongs to the ARR family. Type-A subfamily. Post-translationally, two-component system major event consists of a His-to-Asp phosphorelay between a sensor histidine kinase (HK) and a response regulator (RR). In plants, the His-to-Asp phosphorelay involves an additional intermediate named Histidine-containing phosphotransfer protein (HPt). This multistep phosphorelay consists of a His-Asp-His-Asp sequential transfer of a phosphate group between first a His and an Asp of the HK protein, followed by the transfer to a conserved His of the HPt protein and finally the transfer to an Asp in the receiver domain of the RR protein. In terms of tissue distribution, predominantly expressed in roots.

Its subcellular location is the nucleus. Its function is as follows. Functions as a response regulator involved in His-to-Asp phosphorelay signal transduction system. Phosphorylation of the Asp residue in the receiver domain activates the ability of the protein to promote the transcription of target genes. Type-A response regulators seem to act as negative regulators of the cytokinin signaling. This Arabidopsis thaliana (Mouse-ear cress) protein is Two-component response regulator ARR8 (ARR8).